The following is a 633-amino-acid chain: Phosphomethylpyrimidine synthase (633 aa).

Polar residues predominate over residues 1-13 (MNIRSNPDTTLPA). The segment at 1 to 22 (MNIRSNPDTTLPAVTTGPLPSS) is disordered. Substrate is bound by residues Asn-221, Met-250, Tyr-279, His-315, 335–337 (SRG), 376–379 (DGLR), and Glu-415. His-419 contributes to the Zn(2+) binding site. Tyr-442 is a substrate binding site. His-483 provides a ligand contact to Zn(2+). Cys-563, Cys-566, and Cys-571 together coordinate [4Fe-4S] cluster.

Belongs to the ThiC family. Homodimer. [4Fe-4S] cluster serves as cofactor.

It carries out the reaction 5-amino-1-(5-phospho-beta-D-ribosyl)imidazole + S-adenosyl-L-methionine = 4-amino-2-methyl-5-(phosphooxymethyl)pyrimidine + CO + 5'-deoxyadenosine + formate + L-methionine + 3 H(+). The protein operates within cofactor biosynthesis; thiamine diphosphate biosynthesis. Functionally, catalyzes the synthesis of the hydroxymethylpyrimidine phosphate (HMP-P) moiety of thiamine from aminoimidazole ribotide (AIR) in a radical S-adenosyl-L-methionine (SAM)-dependent reaction. This Bradyrhizobium sp. (strain BTAi1 / ATCC BAA-1182) protein is Phosphomethylpyrimidine synthase.